A 428-amino-acid chain; its full sequence is UDP-N-acetylglucosamine 1-carboxyvinyltransferase 2 (428 aa).

22–23 (KN) contributes to the phosphoenolpyruvate binding site. R92 is a binding site for UDP-N-acetyl-alpha-D-glucosamine. C116 acts as the Proton donor in catalysis. Residue C116 is modified to 2-(S-cysteinyl)pyruvic acid O-phosphothioketal. UDP-N-acetyl-alpha-D-glucosamine-binding positions include 121–125 (RPIDQ), D304, and I326.

The protein belongs to the EPSP synthase family. MurA subfamily.

It is found in the cytoplasm. It carries out the reaction phosphoenolpyruvate + UDP-N-acetyl-alpha-D-glucosamine = UDP-N-acetyl-3-O-(1-carboxyvinyl)-alpha-D-glucosamine + phosphate. It participates in cell wall biogenesis; peptidoglycan biosynthesis. Its function is as follows. Cell wall formation. Adds enolpyruvyl to UDP-N-acetylglucosamine. The polypeptide is UDP-N-acetylglucosamine 1-carboxyvinyltransferase 2 (Geobacillus kaustophilus (strain HTA426)).